The primary structure comprises 64 residues: Small ribosomal subunit protein eS17 (64 aa).

This sequence belongs to the eukaryotic ribosomal protein eS17 family.

The sequence is that of Small ribosomal subunit protein eS17 from Methanosarcina mazei (strain ATCC BAA-159 / DSM 3647 / Goe1 / Go1 / JCM 11833 / OCM 88) (Methanosarcina frisia).